The primary structure comprises 616 residues: Chaperone protein HscA homolog (616 aa).

It belongs to the heat shock protein 70 family.

Chaperone involved in the maturation of iron-sulfur cluster-containing proteins. Has a low intrinsic ATPase activity which is markedly stimulated by HscB. This Vibrio atlanticus (strain LGP32) (Vibrio splendidus (strain Mel32)) protein is Chaperone protein HscA homolog.